The sequence spans 213 residues: HTH-type transcriptional regulator SrpR (213 aa).

Residues 10 to 70 (EETRQRIIDA…AVLASRQHPL (61 aa)) enclose the HTH tetR-type domain. The segment at residues 33 to 52 (TLDQIARKAGVTRGAVYWHF) is a DNA-binding region (H-T-H motif).

In terms of biological role, in conjunction with SrpS represses the srpABC operon. This is HTH-type transcriptional regulator SrpR (srpR) from Pseudomonas putida (Arthrobacter siderocapsulatus).